Here is a 490-residue protein sequence, read N- to C-terminus: MRINPTTSGSEVSAVEKKNLGRIVKIIGPVLDVAFPPGKMPNIYNALVVQGRDNEQTNVTCEVQQLLGNNRVRAVAMSDTDGLMRGMGVIDTGAPISVPVGGSTLGRIFNVLGQPVDNLGPVDTNTTSPIHRSAPAFIQLDTKLSIFETGIKVVDLLAPYRRGGKIGLFGGAGVGKTVLIMELINNIAKAHGGVSVFGGVGERTREGNDLYLEMKESGVINEENIPESKVALVYGQMNEPPGARMRVGLTALTMAEYFRDVNEQDVLLFIDNIFRFVQAGSEVSALLGRMPSAVGYQPTLSTEMGSLQERITSTKEGSITSIQAVYVPADDLTDPAPATTFAHLDATTVLSRGLAAKGIYPAVDPLDSTSTMLQPRIVGEEHYETAQRVKQTLQRYKELQDIIAILGLDELSEEDRLTVARARKIERFLSQPFFVAEVFTGSPGKYVGLAETIRGFQLILSGELDGLPEQAFYLVGNIDEATAKAMNLKT.

Residue 170–177 (GGAGVGKT) participates in ATP binding.

This sequence belongs to the ATPase alpha/beta chains family. In terms of assembly, F-type ATPases have 2 components, CF(1) - the catalytic core - and CF(0) - the membrane proton channel. CF(1) has five subunits: alpha(3), beta(3), gamma(1), delta(1), epsilon(1). CF(0) has four main subunits: a(1), b(1), b'(1) and c(9-12).

It is found in the plastid. It localises to the chloroplast thylakoid membrane. It catalyses the reaction ATP + H2O + 4 H(+)(in) = ADP + phosphate + 5 H(+)(out). Produces ATP from ADP in the presence of a proton gradient across the membrane. The catalytic sites are hosted primarily by the beta subunits. The sequence is that of ATP synthase subunit beta, chloroplastic from Ipomoea wrightii (Wright's morning glory).